We begin with the raw amino-acid sequence, 276 residues long: 2-dehydro-3-deoxyphosphooctonate aldolase (276 aa).

It belongs to the KdsA family.

It localises to the cytoplasm. It carries out the reaction D-arabinose 5-phosphate + phosphoenolpyruvate + H2O = 3-deoxy-alpha-D-manno-2-octulosonate-8-phosphate + phosphate. Its pathway is carbohydrate biosynthesis; 3-deoxy-D-manno-octulosonate biosynthesis; 3-deoxy-D-manno-octulosonate from D-ribulose 5-phosphate: step 2/3. It participates in bacterial outer membrane biogenesis; lipopolysaccharide biosynthesis. The protein is 2-dehydro-3-deoxyphosphooctonate aldolase of Xylella fastidiosa (strain 9a5c).